The chain runs to 178 residues: Histone deacetylase complex subunit SAP30L (178 aa).

2 cysteine pairs are disulfide-bonded: Cys24-Cys25 and Cys33-Cys69. The Atypical zinc-finger motif lies at 24 to 72 (CCLIEDAERCGRPAGNASFSKRIQKSISQRKLKLDIDKSVRHLYICDFH). The segment at 80–99 (RNKRKRKTSDDGGESPDHEV) is disordered. A Nuclear localization signal (NLS) motif is present at residues 81 to 86 (NKRKRK). The interval 83 to 85 (RKR) is important for DNA and phosphoinositide binding.

The protein belongs to the SAP30 family. As to quaternary structure, interacts with components of the histone deacetylase complex sin3a, hdac1 and hdac2. Binds histones and nucleosomes. In terms of tissue distribution, detected in embryos at 2dpf (at protein level). Widely expressed during embryogenesis and in adults.

It localises to the nucleus. The protein resides in the nucleolus. In terms of biological role, functions as a transcription repressor, probably via its interaction with histone deacetylase complexes. Required for normal expression of numerous target genes. Involved in the functional recruitment of the class 1 Sin3-histone deacetylase complex (HDAC) to the nucleolus. Binds DNA, apparently without sequence-specificity, and bends bound double-stranded DNA. Binds phosphoinositol phosphates (phosphoinositol 3-phosphate, phosphoinositol 4-phosphate and phosphoinositol 5-phosphate) via the same basic sequence motif that mediates DNA binding and nuclear import. The protein is Histone deacetylase complex subunit SAP30L (sap30l) of Danio rerio (Zebrafish).